A 195-amino-acid polypeptide reads, in one-letter code: 3-isopropylmalate dehydratase small subunit (195 aa).

This sequence belongs to the LeuD family. LeuD type 1 subfamily. Heterodimer of LeuC and LeuD.

The catalysed reaction is (2R,3S)-3-isopropylmalate = (2S)-2-isopropylmalate. It participates in amino-acid biosynthesis; L-leucine biosynthesis; L-leucine from 3-methyl-2-oxobutanoate: step 2/4. In terms of biological role, catalyzes the isomerization between 2-isopropylmalate and 3-isopropylmalate, via the formation of 2-isopropylmaleate. The chain is 3-isopropylmalate dehydratase small subunit from Karelsulcia muelleri (strain GWSS) (Sulcia muelleri).